Reading from the N-terminus, the 1360-residue chain is Ubiquitin carboxyl-terminal hydrolase 19 (1360 aa).

Residues 1–46 (MSAGASATGPRRGPPGLEEATSKKKQKDRANLESKDGDARRVSLPR) form a disordered region. Residues 1 to 1333 (MSAGASATGP…TTPDEGCLRY (1333 aa)) are Cytoplasmic-facing. The span at 28–46 (DRANLESKDGDARRVSLPR) shows a compositional bias: basic and acidic residues. Positions 51–140 (KDELLLDWRQ…VPLLTWPSLL (90 aa)) constitute a CS 1 domain. A disordered region spans residues 163–239 (PIALEPGSEP…APSFLSDSAT (77 aa)). Residues 170–181 (SEPRRAKQEARN) are compositionally biased toward basic and acidic residues. Positions 189–199 (GEVGSGAGPGT) are enriched in gly residues. Residue Ser-220 is modified to Phosphoserine. A CS 2 domain is found at 322 to 424 (LAFVKNDSYE…RQSQRWGGLE (103 aa)). The disordered stretch occupies residues 432–482 (VGGAKVAVPTGPTPLDSTPPGGGPHPLTGQEEARAVEKEKPKARSEDSGLD). Residues 462–478 (EEARAVEKEKPKARSED) show a composition bias toward basic and acidic residues. One can recognise a USP domain in the interval 539–1256 (TGLVNLGNTC…YAYVLFYRRR (718 aa)). The active-site Nucleophile is Cys-548. Positions 833, 836, 850, 853, 859, 863, 871, and 875 each coordinate Zn(2+). Residues 833–875 (CAACQRKQQSEEEKLKRCTRCYRVGYCNQFCQKTHWPDHKGLC) form an MYND-type zinc finger. Residues 965 to 988 (DTGAHRVWPPADRGPVPSTSGLSS) are disordered. Catalysis depends on His-1207, which acts as the Proton acceptor. Positions 1259-1274 (PVERPPRASHSEHHPD) are enriched in basic and acidic residues. The interval 1259-1281 (PVERPPRASHSEHHPDLGPAAEA) is disordered. Residues 1334-1354 (FVLGTVAALVALVLNVFYPLV) form a helical membrane-spanning segment. Residues 1355–1360 (SQSRWR) are Lumenal-facing.

Interacts with RNF123. Interacts with BIRC2/c-IAP1, BIRC3/c-IAP2 and XIAP/BIRC4. Interacts with HIF1A (via N-terminus).

The protein resides in the endoplasmic reticulum membrane. It catalyses the reaction Thiol-dependent hydrolysis of ester, thioester, amide, peptide and isopeptide bonds formed by the C-terminal Gly of ubiquitin (a 76-residue protein attached to proteins as an intracellular targeting signal).. Deubiquitinating enzyme that regulates the degradation of various proteins by removing ubiquitin moieties, thereby preventing their proteasomal degradation. Stabilizes RNF123, which promotes CDKN1B degradation and contributes to cell proliferation. Decreases the levels of ubiquitinated proteins during skeletal muscle formation and acts to repress myogenesis. Modulates transcription of major myofibrillar proteins. Also involved in turnover of endoplasmic-reticulum-associated degradation (ERAD) substrates. Mechanistically, deubiquitinates and thereby stabilizes several E3 ligases involved in the ERAD pathway including SYVN1 or MARCHF6. Regulates the stability of other E3 ligases including BIRC2/c-IAP1 and BIRC3/c-IAP2 by preventing their ubiquitination. Required for cells to mount an appropriate response to hypoxia by rescuing HIF1A from degradation in a non-catalytic manner and by mediating the deubiquitination of FUNDC1. Attenuates mitochondrial damage and ferroptosis by targeting and stabilizing NADPH oxidase 4/NOX4. Negatively regulates TNF-alpha- and IL-1beta-triggered NF-kappa-B activation by hydrolyzing 'Lys-27'- and 'Lys-63'-linked polyubiquitin chains from MAP3K7. Modulates also the protein level and aggregation of polyQ-expanded huntingtin/HTT through HSP90AA1. In Mus musculus (Mouse), this protein is Ubiquitin carboxyl-terminal hydrolase 19 (Usp19).